The following is a 578-amino-acid chain: Frizzled and smoothened-like protein Q (578 aa).

Residues 1-23 form the signal peptide; the sequence is MKNSFLINILIIYYLFIILFVNS. Topologically, residues 24–233 are extracellular; it reads QDLKLGGSCE…GKTKILDRTN (210 aa). Residues 27–157 enclose the FZ domain; the sequence is KLGGSCELID…GAPMFPINST (131 aa). Intrachain disulfides connect cysteine 32-cysteine 95, cysteine 41-cysteine 88, cysteine 79-cysteine 128, and cysteine 121-cysteine 141. 4 N-linked (GlcNAc...) asparagine glycosylation sites follow: asparagine 46, asparagine 64, asparagine 99, and asparagine 104. N-linked (GlcNAc...) asparagine glycans are attached at residues asparagine 144, asparagine 155, asparagine 181, and asparagine 233. A helical membrane pass occupies residues 234 to 254; it reads YTLTSISFITCIFMILTFGVL. At 255–261 the chain is on the cytoplasmic side; it reads PNKITHR. The chain crosses the membrane as a helical span at residues 262 to 282; the sequence is MESILSFACGGCITALSLFIQ. At 283-305 the chain is on the extracellular side; that stretch reads SRQDNFNCSSDPGRFKSQSDYLC. N-linked (GlcNAc...) asparagine glycosylation occurs at asparagine 289. A helical membrane pass occupies residues 306-326; it reads LLTGLIFQFGAITSIFWSPMI. Over 327–341 the chain is Cytoplasmic; sequence AYDFYITSTLGKIRK. Residues 342–362 traverse the membrane as a helical segment; that stretch reads FGLYRIVLWSFIFVLTALPAF. Over 363–388 the chain is Extracellular; it reads GGKYSATVATNCWINSDDGSAWQYVS. The chain crosses the membrane as a helical span at residues 389-409; that stretch reads FYIPSWCAMGLICLFSILSVI. The Cytoplasmic segment spans residues 410–422; that stretch reads NVSKMYIQTPNNR. Residues 423–443 form a helical membrane-spanning segment; the sequence is ILFFNIKILITLLLFLFVLTF. Topologically, residues 444-490 are extracellular; that stretch reads ASSLKFYMEERMDTYFDAIAVWVECIGKGDPSQCELHAPGYDLKALN. A helical membrane pass occupies residues 491–511; the sequence is IVVIGILGFTVFIGYGLDPIV. Over 512 to 578 the chain is Cytoplasmic; it reads IHIWMESKKF…LKSTEINQQP (67 aa). The span at 544–556 shows a compositional bias: low complexity; the sequence is NNNNNETASTSSG. Residues 544–578 form a disordered region; sequence NNNNNETASTSSGNERKQTTVKMSNLKSTEINQQP. Polar residues predominate over residues 563 to 578; it reads TVKMSNLKSTEINQQP.

This sequence belongs to the G-protein coupled receptor Fz/Smo family.

It localises to the membrane. In Dictyostelium discoideum (Social amoeba), this protein is Frizzled and smoothened-like protein Q (fslQ).